A 561-amino-acid polypeptide reads, in one-letter code: Carboxylesterase 1E (561 aa).

The first 18 residues, 1-18 (MCLYALILVFLAAFTAGG), serve as a signal peptide directing secretion. N-linked (GlcNAc...) asparagine glycosylation is found at Asn-79 and Asn-107. A disulfide bridge connects residues Cys-87 and Cys-116. Ser-221 acts as the Acyl-ester intermediate in catalysis. Cys-273 and Cys-284 are disulfide-bonded. Residues Glu-353 and His-466 each act as charge relay system in the active site. Asn-489 carries an N-linked (GlcNAc...) asparagine glycan. Residues 558–561 (HTEL) carry the Prevents secretion from ER motif.

It belongs to the type-B carboxylesterase/lipase family. In terms of tissue distribution, expressed in liver.

The protein resides in the endoplasmic reticulum lumen. Its subcellular location is the microsome membrane. The catalysed reaction is a carboxylic ester + H2O = an alcohol + a carboxylate + H(+). It carries out the reaction all-trans-retinyl hexadecanoate + H2O = all-trans-retinol + hexadecanoate + H(+). Functionally, involved in the detoxification of xenobiotics and in the activation of ester and amide prodrugs. Hydrolyzes retinyl esters. The sequence is that of Carboxylesterase 1E (Ces1e) from Rattus norvegicus (Rat).